Consider the following 474-residue polypeptide: 3-isopropylmalate dehydratase large subunit (474 aa).

Residues Cys353, Cys414, and Cys417 each coordinate [4Fe-4S] cluster.

It belongs to the aconitase/IPM isomerase family. LeuC type 1 subfamily. As to quaternary structure, heterodimer of LeuC and LeuD. [4Fe-4S] cluster is required as a cofactor.

The catalysed reaction is (2R,3S)-3-isopropylmalate = (2S)-2-isopropylmalate. Its pathway is amino-acid biosynthesis; L-leucine biosynthesis; L-leucine from 3-methyl-2-oxobutanoate: step 2/4. In terms of biological role, catalyzes the isomerization between 2-isopropylmalate and 3-isopropylmalate, via the formation of 2-isopropylmaleate. The protein is 3-isopropylmalate dehydratase large subunit of Pseudomonas aeruginosa (strain LESB58).